The primary structure comprises 174 residues: FMN-dependent NADPH-azoreductase (174 aa).

Residues 9–11 (TPR), 15–16 (RT), 73–76 (EYHS), and Gly-106 contribute to the FMN site.

The protein belongs to the azoreductase type 2 family. In terms of assembly, homotetramer. Requires FMN as cofactor.

Catalyzes the reductive cleavage of azo bond in aromatic azo compounds to the corresponding amines. Requires NADPH, but not NADH, as an electron donor for its activity. In Bacillus subtilis (strain 168), this protein is FMN-dependent NADPH-azoreductase (azr).